The following is a 104-amino-acid chain: Large ribosomal subunit protein uL24 (104 aa).

This sequence belongs to the universal ribosomal protein uL24 family. Part of the 50S ribosomal subunit.

Its function is as follows. One of two assembly initiator proteins, it binds directly to the 5'-end of the 23S rRNA, where it nucleates assembly of the 50S subunit. One of the proteins that surrounds the polypeptide exit tunnel on the outside of the subunit. This Rhodopseudomonas palustris (strain BisB18) protein is Large ribosomal subunit protein uL24.